The sequence spans 375 residues: MGLSPAAVLIFLLLGVSQTYAAFSCKDQSGNDVDWFAVYKMPIEKDDGSVTGLAGGVAWYYVDVNKKGTLTPSAKTLDDNDQAIAYTLQQYYDKQNDKTIFHVMYNDEPWGSKSTSGIKLEEILSNRVYSNYTHEDDSTSTAFGHTKGTIFFDGTSGVWLVHSVPLFPNPTKYEYPVSGHDYGQTMLCMTFKYAQLKSIGTQLFFNRPNIYSSNLPTNMAADNADLAKAIAGQYQKGQPFQSVIELETMAGYSFTNFAKSKEFNADLYDTLVAPTLKTDLVVETWRRGSEIPLDCKLTYHANDALSIHVGSTTAFSYTKDHSKMAHSADMTKPWVCIGDINRMTSQYVRGGGTTCISSSFLWKAYSVIATQNNCA.

The signal sequence occupies residues Met-1–Ala-21. Residue Asn-131 is glycosylated (N-linked (GlcNAc...) asparagine).

This sequence belongs to the DNase II family.

The catalysed reaction is Endonucleolytic cleavage to nucleoside 3'-phosphates and 3'-phosphooligonucleotide end-products.. Hydrolyzes DNA under acidic conditions with a preference for double-stranded DNA. Implicated in apoptosis. The sequence is that of Deoxyribonuclease-2 (nuc-1) from Caenorhabditis elegans.